The following is a 172-amino-acid chain: Adenine phosphoribosyltransferase (172 aa).

It belongs to the purine/pyrimidine phosphoribosyltransferase family. In terms of assembly, homodimer.

The protein localises to the cytoplasm. It catalyses the reaction AMP + diphosphate = 5-phospho-alpha-D-ribose 1-diphosphate + adenine. The protein operates within purine metabolism; AMP biosynthesis via salvage pathway; AMP from adenine: step 1/1. Catalyzes a salvage reaction resulting in the formation of AMP, that is energically less costly than de novo synthesis. The protein is Adenine phosphoribosyltransferase of Synechococcus sp. (strain CC9605).